A 575-amino-acid polypeptide reads, in one-letter code: Inactive terpenoid synthase 20, chloroplastic (575 aa).

Residues 1–52 (MEAITKNGSLSQTLVHCGPKSLSSFIPVRCLRFSKNPFPKKLVVTRARTSIN) constitute a chloroplast transit peptide. Residues aspartate 332, aspartate 336, aspartate 474, threonine 478, and glutamate 482 each contribute to the Mg(2+) site. Positions 332 to 336 (DDLYD) match the DDXXD motif motif.

Belongs to the terpene synthase family. Tpsa subfamily. In terms of tissue distribution, predominantly expressed in roots but also in leaves and stems.

The protein localises to the plastid. Its subcellular location is the chloroplast. Does not possess diterpene synthase activity. This chain is Inactive terpenoid synthase 20, chloroplastic, found in Arabidopsis thaliana (Mouse-ear cress).